Consider the following 291-residue polypeptide: 5'-3' exonuclease (291 aa).

Residues Thr-176–Lys-269 form the 5'-3' exonuclease domain.

Functionally, 5'-3' exonuclease acting preferentially on double-stranded DNA. This Mycoplasma pneumoniae (strain ATCC 29342 / M129 / Subtype 1) (Mycoplasmoides pneumoniae) protein is 5'-3' exonuclease (polA).